We begin with the raw amino-acid sequence, 272 residues long: MKDNNEVLKLFIVSDSIGETAQRMIHATLTQFPDLTQVEIKKFPYIKDEQEFLNVLQLAKEQNAIVATTLVSESFNALGHQFANEHQIPYVDYMSELISIIKQHTHAKPLMESGALRKLNDEYFKRIEAIEYSVKYDDGKHFTDIGEADALIVGVSRTSKTPLSMYLANKGYKIANIPLVPEVAIPDNVFQQKNLKVFGLTASPNYIANIRRNRAETLGLSSESNYNSLERIKKELSYAEEVFRKLNATVINTEYKSIEESAFYIEKFLAKR.

An ADP-binding site is contributed by 154 to 161 (GVSRTSKT).

Belongs to the pyruvate, phosphate/water dikinase regulatory protein family. PDRP subfamily.

The catalysed reaction is N(tele)-phospho-L-histidyl/L-threonyl-[pyruvate, phosphate dikinase] + ADP = N(tele)-phospho-L-histidyl/O-phospho-L-threonyl-[pyruvate, phosphate dikinase] + AMP + H(+). It catalyses the reaction N(tele)-phospho-L-histidyl/O-phospho-L-threonyl-[pyruvate, phosphate dikinase] + phosphate + H(+) = N(tele)-phospho-L-histidyl/L-threonyl-[pyruvate, phosphate dikinase] + diphosphate. Functionally, bifunctional serine/threonine kinase and phosphorylase involved in the regulation of the pyruvate, phosphate dikinase (PPDK) by catalyzing its phosphorylation/dephosphorylation. The polypeptide is Putative pyruvate, phosphate dikinase regulatory protein 2 (Staphylococcus epidermidis (strain ATCC 35984 / DSM 28319 / BCRC 17069 / CCUG 31568 / BM 3577 / RP62A)).